Reading from the N-terminus, the 248-residue chain is Probable phosphatase VCM66_A0854 (248 aa).

9 residues coordinate Zn(2+): H8, H10, H16, H41, E74, H102, H132, D194, and H196.

Belongs to the PHP family. Zn(2+) is required as a cofactor.

This Vibrio cholerae serotype O1 (strain M66-2) protein is Probable phosphatase VCM66_A0854.